A 673-amino-acid polypeptide reads, in one-letter code: DNA ligase (673 aa).

Residues 33–37 (DAEYD), 82–83 (SL), and E114 contribute to the NAD(+) site. The active-site N6-AMP-lysine intermediate is K116. The NAD(+) site is built by R137, E174, K291, and K315. Residues C409, C412, C427, and C433 each coordinate Zn(2+). The 82-residue stretch at 592-673 (AQEQPLAGLV…LINLLEQHNG (82 aa)) folds into the BRCT domain.

It belongs to the NAD-dependent DNA ligase family. LigA subfamily. Mg(2+) is required as a cofactor. The cofactor is Mn(2+).

The catalysed reaction is NAD(+) + (deoxyribonucleotide)n-3'-hydroxyl + 5'-phospho-(deoxyribonucleotide)m = (deoxyribonucleotide)n+m + AMP + beta-nicotinamide D-nucleotide.. Its function is as follows. DNA ligase that catalyzes the formation of phosphodiester linkages between 5'-phosphoryl and 3'-hydroxyl groups in double-stranded DNA using NAD as a coenzyme and as the energy source for the reaction. It is essential for DNA replication and repair of damaged DNA. The polypeptide is DNA ligase (Pseudoalteromonas translucida (strain TAC 125)).